We begin with the raw amino-acid sequence, 920 residues long: MDFNTSTRSKSQPVQRNNYKVLYDPELGIKENLGRKIIYRFNGVSKPPLVVRDPRLKNPIYARGIPKSGRPFLKSLQTINYDYNENSLGPEPPTQVFVSNISPLVTSEQLRYHFKSFGEVFDLDLKLNPYTGTSLGLCCISFDKRSSISVAAHSAKIAVQQANGLRFSGKPLSVVLDRDGSLCEEAFKKALNAVEKQFQEETLQKQRFEREDESSRQKLSAAMNEDIPPWRQPSKNSQTLSNGDLQHSKVQNVDQKSGFLTSSETDVPKNINDYIYLLIDDRFVPPDRVYYTDIKHHFRKFLYEKIYMNKDGFYITFNNYREASNCYRALDRTYVQNCRIKLKFHDIPSRTKEDGKKSAVRRVVLPPEEAYAEATSVVLRDLEAALLRDVKSKIIGPAIFKYLHSMPKPSVKEELQENLLVSSTSVPDVPLKIESTVGKLPSLPKFKKRVDSSKMNLSAGSKTKSKLQRRRRRRHEARPLHYQLNQMYNSSASEAESDQELLLSSGDERVERGKIGSIKSVKSDEATPVFSDTSDENDKFHRFRTKSKISKKKYEKMEVDYTSSSETESDASILSPSAAIPKSGSAIKDELISPKKEIDEVLALAPKWRINEFDETGSVYYGALPYNYPEDDVLLDLDGLQYLVKNDEDYSYLQEALKDEPLMDINDPNFWAYERKSCKFKNGDVKYGDTAILPEPKGYFRSNTSGSAKSEGYYIIPTTEKSLYLPLRNRSTIDTISHSTSRITSRMNRVNNRRLAAGVEKSQLPAEADLLRFNALKARKKQLHFGPSRIHTLGLFAMENIDKNDMVIEYIGEIIRQRVADNREKNYVREGIGDSYLFRIDEDVIVDATKKGNIARFINHSCAPNCIARIIRVEGKRKIVIYADRDIMHGEELTYDYKFPEEADKIPCLCGAPTCRGYLN.

The RRM domain occupies 94–179 (TQVFVSNISP…KPLSVVLDRD (86 aa)). Basic and acidic residues predominate over residues 205-216 (KQRFEREDESSR). Disordered stretches follow at residues 205 to 242 (KQRF…TLSN) and 448 to 485 (KRVD…YQLN). 2 stretches are compositionally biased toward polar residues: residues 233-242 (PSKNSQTLSN) and 453-462 (SKMNLSAGSK). Basic residues predominate over residues 463–476 (TKSKLQRRRRRRHE). Positions 749–754 (RVNNRR) match the RxxxRR motif motif. An SET domain is found at 781–898 (KQLHFGPSRI…HGEELTYDYK (118 aa)). Y897 is a binding site for S-adenosyl-L-methionine. A Post-SET domain is found at 904–920 (DKIPCLCGAPTCRGYLN).

This sequence belongs to the class V-like SAM-binding methyltransferase superfamily. Component of the Set1C/COMPASS complex composed of ash2, sdc1, set1, shg1, spp1, swd1, swd2 and swd3.

The protein localises to the nucleus. Its subcellular location is the chromosome. It catalyses the reaction L-lysyl(4)-[histone H3] + 3 S-adenosyl-L-methionine = N(6),N(6),N(6)-trimethyl-L-lysyl(4)-[histone H3] + 3 S-adenosyl-L-homocysteine + 3 H(+). It carries out the reaction N(6)-methyl-L-lysyl(4)-[histone H3] + S-adenosyl-L-methionine = N(6),N(6)-dimethyl-L-lysyl(4)-[histone H3] + S-adenosyl-L-homocysteine + H(+). The catalysed reaction is N(6),N(6)-dimethyl-L-lysyl(4)-[histone H3] + S-adenosyl-L-methionine = N(6),N(6),N(6)-trimethyl-L-lysyl(4)-[histone H3] + S-adenosyl-L-homocysteine + H(+). Functionally, catalytic component of the COMPASS (Set1C) complex that specifically mono-, di- and trimethylates histone H3 to form H3K4me1/2/3. Binds RNA which might negatively affect its histone methyltransferase activity. COMPASS recognizes ubiquitinated H2B on one face of the nucleosome which stimulates the methylation of H3 on the opposing face. Methylation promotes maintenance of active chromatin states at euchromatic chromosomal domains and is present throughout the cell cycle. Plays a role in telomere maintenance and DNA repair in an ATM kinase rad3-dependent pathway. Required for efficient telomeric and centromeric silencing. The protein is Histone-lysine N-methyltransferase, H3 lysine-4 specific of Schizosaccharomyces pombe (strain 972 / ATCC 24843) (Fission yeast).